We begin with the raw amino-acid sequence, 770 residues long: Rho guanine nucleotide exchange factor 38 (770 aa).

Residues 33–88 (KTDTVVDSSVSGDHSGSLRRSQSDRTEYNQKLQEKMTPQAECSSAETPTPEDEQQV) form a disordered region. T34 bears the Phosphothreonine mark. Residues 37 to 47 (VVDSSVSGDHS) show a composition bias toward low complexity. Residues 53–66 (SQSDRTEYNQKLQE) are compositionally biased toward basic and acidic residues. One can recognise a DH domain in the interval 94 to 285 (KRAKIIRELI…KDINVNINEL (192 aa)). The BAR domain occupies 327 to 542 (LKILTRGESQ…VHSLTFVKEN (216 aa)). 2 consecutive SH3 domains span residues 581–644 (GAEE…PHNP) and 706–769 (VDEQ…KMTY).

Its function is as follows. May act as a guanine-nucleotide releasing factor. The protein is Rho guanine nucleotide exchange factor 38 (Arhgef38) of Mus musculus (Mouse).